The primary structure comprises 295 residues: Protease HtpX (295 aa).

Helical transmembrane passes span 4–24 and 41–61; these read ILLF…TLSL and SSLL…SLFI. His147 is a binding site for Zn(2+). Glu148 is a catalytic residue. His151 is a binding site for Zn(2+). A run of 2 helical transmembrane segments spans residues 158-178 and 199-219; these read VTLA…ARII and VATI…VMWF. Glu224 contributes to the Zn(2+) binding site.

Belongs to the peptidase M48B family. The cofactor is Zn(2+).

Its subcellular location is the cell inner membrane. This is Protease HtpX from Pseudomonas putida (strain GB-1).